A 325-amino-acid chain; its full sequence is MARLPLKQFLADNPKKVLVLDGGQGTELENRGIKVANPVWSTIPFISESFWSDESSANRKIVKEMFNDFLNAGAEILMTTTYQTSYKSVSENTPIRTLSEYNNLLNRIVDFSRNCIGEDKYLIGCIGPWGAHICREFTGDYGAEPENIDFYQYFKPQLENFNKNDKLDLIGFETIPNIHELKAILSWDESILSRPFYIGLSVHEHGVLRDGTTMEEIAQVIKDLGDKINPNFSFLGINCVSFNQSPDILESLHQALPNMALLAYPNSGEVYDTEKKIWLPNSDKLNSWDTVVKQYISSGARIIGGCCRTSPKDIQEISAAVKKYT.

One can recognise a Hcy-binding domain in the interval 6 to 321 (LKQFLADNPK…KDIQEISAAV (316 aa)). The residue at position 138 (T138) is a Phosphothreonine. Zn(2+) contacts are provided by C239, C306, and C307.

Requires Zn(2+) as cofactor.

The protein localises to the cytoplasm. It is found in the nucleus. It catalyses the reaction S-methyl-L-methionine + L-homocysteine = 2 L-methionine + H(+). Its function is as follows. Homocysteine S-methyltransferase involved in the conversion of S-adenosylmethionine (AdoMet) to methionine to control the methionine/AdoMet ratio. Also converts S-methylmethionine (SMM) to methionine. The protein is Homocysteine S-methyltransferase 2 (SAM4) of Saccharomyces cerevisiae (strain ATCC 204508 / S288c) (Baker's yeast).